The primary structure comprises 628 residues: Rac GTPase-activating protein 1 (628 aa).

Position 1 is an N-acetylmethionine (Met-1). Residues 33–110 (QVVKDFEDFR…IQLIRDILMC (78 aa)) are a coiled coil. The interval 107–286 (ILMCDTSGSI…GTPQNTGGMR (180 aa)) is interaction with SLC26A8. Ser-150 bears the Phosphoserine; by PLK1 mark. Ser-155 bears the Phosphoserine mark. At Ser-158 the chain carries Phosphoserine; by PLK1. The residue at position 162 (Thr-162) is a Phosphothreonine. Residues Ser-165 and Ser-171 each carry the phosphoserine; by PLK1 modification. The segment at 179 to 201 (KKREKRRSNSRQFIDGPPGPVKK) is disordered. Residues Ser-204, Ser-207, and Ser-215 each carry the phosphoserine modification. The segment at 242–284 (SWTRSRGKSGPLQPVNSDSALNSRPLEPRTDTDNLGTPQNTGG) is disordered. Residue Lys-249 forms a Glycyl lysine isopeptide (Lys-Gly) (interchain with G-Cter in SUMO2) linkage. The residue at position 258 (Ser-258) is a Phosphoserine. The span at 274 to 283 (DNLGTPQNTG) shows a compositional bias: polar residues. The Phorbol-ester/DAG-type zinc-finger motif lies at 287–336 (LHDFVSKTVIKPESCVPCGKRIKFGKLSLKCRDCRLVSHPECRDRCPLPC). Thr-343 is modified (phosphothreonine). A Rho-GAP domain is found at 350–540 (GMLADFVSQA…RLLSLPLEYW (191 aa)). At Ser-388 the chain carries Phosphoserine; by AURKB. Lys-405 is covalently cross-linked (Glycyl lysine isopeptide (Lys-Gly) (interchain with G-Cter in SUMO2)). Ser-411 bears the Phosphoserine; by AURKB mark. Thr-564, Thr-577, Thr-585, and Thr-602 each carry phosphothreonine.

As to quaternary structure, heterotetramer of two molecules each of RACGAP1 and KIF23. Found in the centralspindlin complex. Associates with alpha-, beta- and gamma-tubulin and microtubules. Interacts via its Rho-GAP domain with RND2. Associates with AURKB during M phase. Interacts via its Rho-GAP domain and basic region with PRC1. The interaction with PRC1 inhibits its GAP activity towards CDC42 in vitro, which may be required for maintaining normal spindle morphology. Interacts with SLC26A8 via its N-terminus. Interacts with ECT2; the interaction is direct, occurs at anaphase and during cytokinesis in a microtubule-dependent manner, is enhanced by phosphorylation by PLK1 and phosphorylation at Ser-165 plays a major role in mediating binding. Interacts with RAB11FIP3; the interaction occurs at late telophase. Interacts with KIF23; the interaction is direct. In terms of processing, phosphorylated at multiple sites in the midbody during cytokinesis. Phosphorylation by AURKB on Ser-388 at the midbody is, at least in part, responsible for exerting its latent GAP activity towards RhoA. Phosphorylation on multiple serine residues by PLK1 enhances its association with ECT2 and is critical for cleavage furrow formation. Phosphorylation on Ser-165 plays a major role in mediating interaction with ECT2. Phosphorylation on Ser-158 does not appear to contribute to binding to ECT2. Highly expressed in testis, thymus and spleen and weakly expressed in brain, heart, skeletal muscle and kidney. In testis, expression is restricted to germ cells with the highest levels of expression found in spermatocytes. Not detected in adult liver. Also expressed in fetal liver and in several hematopoietic cell lines.

It localises to the nucleus. Its subcellular location is the cytoplasm. The protein resides in the cytoskeleton. The protein localises to the spindle. It is found in the cytoplasmic vesicle. It localises to the secretory vesicle. Its subcellular location is the acrosome. The protein resides in the cleavage furrow. The protein localises to the midbody. It is found in the midbody ring. It localises to the cell membrane. In terms of biological role, component of the centralspindlin complex that serves as a microtubule-dependent and Rho-mediated signaling required for the myosin contractile ring formation during the cell cycle cytokinesis. Required for proper attachment of the midbody to the cell membrane during cytokinesis. Sequentially binds to ECT2 and RAB11FIP3 which regulates cleavage furrow ingression and abscission during cytokinesis. Plays key roles in controlling cell growth and differentiation of hematopoietic cells through mechanisms other than regulating Rac GTPase activity. Has a critical role in erythropoiesis. Also involved in the regulation of growth-related processes in adipocytes and myoblasts. May be involved in regulating spermatogenesis and in the RACGAP1 pathway in neuronal proliferation. Shows strong GAP (GTPase activation) activity towards CDC42 and RAC1 and less towards RHOA. Essential for the early stages of embryogenesis. May play a role in regulating cortical activity through RHOA during cytokinesis. May participate in the regulation of sulfate transport in male germ cells. In Mus musculus (Mouse), this protein is Rac GTPase-activating protein 1.